A 405-amino-acid chain; its full sequence is Phosphoglycerate kinase (405 aa).

Substrate-binding positions include 23 to 25, arginine 39, 62 to 65, arginine 121, and arginine 154; these read DFN and HLGR. Residues lysine 207, glycine 298, glutamate 329, and 355-358 contribute to the ATP site; that span reads GGDT.

This sequence belongs to the phosphoglycerate kinase family. Monomer.

It localises to the cytoplasm. The enzyme catalyses (2R)-3-phosphoglycerate + ATP = (2R)-3-phospho-glyceroyl phosphate + ADP. The protein operates within carbohydrate degradation; glycolysis; pyruvate from D-glyceraldehyde 3-phosphate: step 2/5. The protein is Phosphoglycerate kinase of Campylobacter hominis (strain ATCC BAA-381 / DSM 21671 / CCUG 45161 / LMG 19568 / NCTC 13146 / CH001A).